Consider the following 435-residue polypeptide: MTQVVNVVGAGLAGSEAAYQLAQRGVKVNLIEMRPVKQTPAHHTDKFAELVCSNSLRGNALTNAVGVLKEEMRQLDSLIISAADKARVPAGGALAVDRHDFAGYVTETLKNHPNITVLNEEINSIPEGYTIIATGPLTTDKLANEIVEATGKDQLYFYDAAAPIIEKDSIDMNKVYLKSRYDKGEAAYLNCPMTEDEFNTFYDALMEAEVAPVNEFEKEKYFEGCMPFEVMAERGRKTLLFGPMKPVGLEDPKTGERPYAVVQLRQDDAAGTLYNIVGFQTHLKWGAQKDVIRLIPGLENVEIVRYGVMHRNTFINSPDVLTETYELKGREELYFAGQMTGVEGYVESAASGLVAGINVAHKMLNKGEVIFPRETMIGSMAYYISHAKNEKNFQPMNANFGLLTTLEKKVKDKKLRYEKLADRALTYLDNYKQTL.

9-14 (GAGLAG) lines the FAD pocket.

It belongs to the MnmG family. TrmFO subfamily. The cofactor is FAD.

It localises to the cytoplasm. The catalysed reaction is uridine(54) in tRNA + (6R)-5,10-methylene-5,6,7,8-tetrahydrofolate + NADH + H(+) = 5-methyluridine(54) in tRNA + (6S)-5,6,7,8-tetrahydrofolate + NAD(+). It carries out the reaction uridine(54) in tRNA + (6R)-5,10-methylene-5,6,7,8-tetrahydrofolate + NADPH + H(+) = 5-methyluridine(54) in tRNA + (6S)-5,6,7,8-tetrahydrofolate + NADP(+). Catalyzes the folate-dependent formation of 5-methyl-uridine at position 54 (M-5-U54) in all tRNAs. The polypeptide is Methylenetetrahydrofolate--tRNA-(uracil-5-)-methyltransferase TrmFO (Staphylococcus saprophyticus subsp. saprophyticus (strain ATCC 15305 / DSM 20229 / NCIMB 8711 / NCTC 7292 / S-41)).